A 318-amino-acid polypeptide reads, in one-letter code: Transcription factor zip-4 (318 aa).

The segment covering 1-13 (MYNYNYSRGNKSM) has biased composition (polar residues). Disordered regions lie at residues 1–20 (MYNY…PRFH), 147–205 (EKKP…TAAA), 238–257 (NNDA…LQKD), and 273–318 (ELQS…KSNY). Positions 173–190 (DYQEEGETSLSDNDESVD) are enriched in acidic residues. The region spanning 228–291 (EPIYKLKRAR…ERDQQLIKQL (64 aa)) is the bZIP domain. The tract at residues 232–266 (KLKRARNNDAVRKSRNKAKELQLQKDEEYDEMKKR) is basic motif. A coiled-coil region spans residues 242-280 (VRKSRNKAKELQLQKDEEYDEMKKRITQLEAELQSEREG). Residues 267-274 (ITQLEAEL) are leucine-zipper. The segment covering 275–298 (QSEREGRERDQQLIKQLIREKEST) has biased composition (basic and acidic residues). Residues 307–318 (RNALESFNKSNY) are compositionally biased toward polar residues.

The protein belongs to the bZIP family. C/EBP subfamily.

It is found in the nucleus. In terms of biological role, transcription factor that binds to the promoter and the enhancer regions of target genes. Involved in responding to mitochondrial damage. Has a protective role in response to infection by the Gram-negative bacterium P.aeruginosa. The sequence is that of Transcription factor zip-4 from Caenorhabditis elegans.